The chain runs to 56 residues: Potassium channel toxin alpha-KTx 9.2 (56 aa).

The signal sequence occupies residues 1–28; the sequence is MSRLFTLVLIVLAMNVMMAIISDPVVEA. Cystine bridges form between cysteine 31–cysteine 47, cysteine 34–cysteine 52, and cysteine 38–cysteine 54.

As to expression, expressed by the venom gland.

Its subcellular location is the secreted. Its function is as follows. Blocks small conductance calcium-activated potassium channels (KCNN, SK). Low toxicity by intracerebroventricular injection into mice. The protein is Potassium channel toxin alpha-KTx 9.2 of Olivierus martensii (Manchurian scorpion).